Consider the following 196-residue polypeptide: Pyridoxal 5'-phosphate synthase subunit PdxT (196 aa).

47-49 lines the L-glutamine pocket; that stretch reads GES. C79 acts as the Nucleophile in catalysis. L-glutamine-binding positions include R106 and 134-135; that span reads IR. Residues H170 and E172 each act as charge relay system in the active site.

This sequence belongs to the glutaminase PdxT/SNO family. In terms of assembly, in the presence of PdxS, forms a dodecamer of heterodimers. Only shows activity in the heterodimer.

It catalyses the reaction aldehydo-D-ribose 5-phosphate + D-glyceraldehyde 3-phosphate + L-glutamine = pyridoxal 5'-phosphate + L-glutamate + phosphate + 3 H2O + H(+). The enzyme catalyses L-glutamine + H2O = L-glutamate + NH4(+). The protein operates within cofactor biosynthesis; pyridoxal 5'-phosphate biosynthesis. Functionally, catalyzes the hydrolysis of glutamine to glutamate and ammonia as part of the biosynthesis of pyridoxal 5'-phosphate. The resulting ammonia molecule is channeled to the active site of PdxS. The sequence is that of Pyridoxal 5'-phosphate synthase subunit PdxT from Bacillus cereus (strain ZK / E33L).